The following is a 29-amino-acid chain: Glucagon (29 aa).

This sequence belongs to the glucagon family.

It localises to the secreted. Promotes hydrolysis of glycogen and lipids, and raises the blood sugar level. This is Glucagon (gcg) from Thunnus obesus (Bigeye tuna).